The chain runs to 129 residues: Nif-specific regulatory protein (129 aa).

Residues 1-46 (EFLLTKIGRQQGRPLTVTDSAIRLLMSHRWPGNVRDVENCLERSAI) form the Sigma-54 factor interaction domain. Residues 101–129 (QAKAARLLGMTPRQIAYRIQTLNIHMRKI) constitute a DNA-binding region (H-T-H motif).

As to quaternary structure, interacts with sigma-54.

Required for activation of most nif operons, which are directly involved in nitrogen fixation. This is Nif-specific regulatory protein (nifA) from Azotobacter chroococcum mcd 1.